A 495-amino-acid polypeptide reads, in one-letter code: Probable serine/threonine-protein kinase DDB_G0292354 (495 aa).

The Protein kinase domain maps to 16-275 (WTVVKKIGQG…PNYVFLQTLL (260 aa)). Residues 22–30 (IGQGAFGEI) and Lys-45 each bind ATP. Asp-136 functions as the Proton acceptor in the catalytic mechanism. A disordered region spans residues 293-469 (EVQTNSGASS…NGNGSNSQPI (177 aa)). Low complexity-rich tracts occupy residues 295-333 (QTNS…NSSA) and 354-364 (NNSNNNNNNNN). Residues 385 to 395 (ESNSQIANSSE) are compositionally biased toward polar residues. A compositionally biased stretch (low complexity) spans 435 to 466 (SNNNNINNNNNNYNNNNNNNNNSHMNGNGSNS).

Belongs to the protein kinase superfamily. CK1 Ser/Thr protein kinase family.

This is Probable serine/threonine-protein kinase DDB_G0292354 from Dictyostelium discoideum (Social amoeba).